Here is a 467-residue protein sequence, read N- to C-terminus: tRNA-2-methylthio-N(6)-dimethylallyladenosine synthase (467 aa).

The region spanning 5-125 is the MTTase N-terminal domain; that stretch reads RKLHIKSYGC…LPQLLAQASR (121 aa). 6 residues coordinate [4Fe-4S] cluster: C14, C50, C88, C166, C170, and C173. The Radical SAM core domain maps to 152–384; the sequence is RARGVSAFVT…QSLIDSQQAA (233 aa). Positions 387-449 constitute a TRAM domain; that stretch reads KAAIGSVVDV…RYSLLGELVA (63 aa).

Belongs to the methylthiotransferase family. MiaB subfamily. As to quaternary structure, monomer. The cofactor is [4Fe-4S] cluster.

The protein localises to the cytoplasm. It catalyses the reaction N(6)-dimethylallyladenosine(37) in tRNA + (sulfur carrier)-SH + AH2 + 2 S-adenosyl-L-methionine = 2-methylsulfanyl-N(6)-dimethylallyladenosine(37) in tRNA + (sulfur carrier)-H + 5'-deoxyadenosine + L-methionine + A + S-adenosyl-L-homocysteine + 2 H(+). In terms of biological role, catalyzes the methylthiolation of N6-(dimethylallyl)adenosine (i(6)A), leading to the formation of 2-methylthio-N6-(dimethylallyl)adenosine (ms(2)i(6)A) at position 37 in tRNAs that read codons beginning with uridine. The chain is tRNA-2-methylthio-N(6)-dimethylallyladenosine synthase from Bradyrhizobium sp. (strain ORS 278).